The following is a 1203-amino-acid chain: Zinc finger and BTB domain-containing protein 38 (1203 aa).

The region spanning 33–100 (CDVTIIVEDT…IYSSTVVVRR (68 aa)) is the BTB domain. Lys43 participates in a covalent cross-link: Glycyl lysine isopeptide (Lys-Gly) (interchain with G-Cter in SUMO2). Ser130 bears the Phosphoserine mark. Residues Lys145, Lys148, Lys151, and Lys260 each participate in a glycyl lysine isopeptide (Lys-Gly) (interchain with G-Cter in SUMO2) cross-link. Residues 230–334 (EAYRSQPLRE…PSETPGPPAA (105 aa)) form a disordered region. A compositionally biased stretch (polar residues) spans 269–280 (TQTQDSDSTTEN). The tract at residues 299-522 (PAPILSHSEP…RRYQCIFCLE (224 aa)) is interaction with CBFA2T3. Basic and acidic residues predominate over residues 313-322 (GDVHFPREDE). A C2H2-type 1 zinc finger spans residues 341-363 (YNCSCCSKSFDSSTLLGAHMQLH). A C2H2-type 2; degenerate zinc finger spans residues 370 to 394 (FVCKYCNKQFTTLNRLDRHEQICMR). C2H2-type zinc fingers lie at residues 459–481 (YSCVVCKRSYVTLSSLRRHANVH), 487–509 (YPCHYCNKVFALAEYRTRHEIWH), and 515–538 (YQCIFCLETFMTYYILKNHQKSFH). Glycyl lysine isopeptide (Lys-Gly) (interchain with G-Cter in SUMO2) cross-links involve residues Lys549 and Lys556. 4 stretches are compositionally biased toward polar residues: residues 581–598 (RNSSYESAQGNRQRNESP), 607–628 (LPSSEMPTLNFQDGRNSLTSSP), 635–644 (PSWQGTPTSA), and 731–741 (SNHQSPSQPVA). Disordered regions lie at residues 581–644 (RNSS…PTSA) and 731–776 (SNHQ…VPCN). The segment covering 747-757 (KDSKPEADKAS) has biased composition (basic and acidic residues). Glycyl lysine isopeptide (Lys-Gly) (interchain with G-Cter in SUMO2) cross-links involve residues Lys750, Lys755, Lys796, Lys806, Lys813, Lys834, Lys842, and Lys849. Disordered regions lie at residues 857–882 (KPKYQMQEETLPRESDPETRGDSPLG) and 895–914 (FDEVSDQDSTDKPWRPYYNY). Positions 866-877 (TLPRESDPETRG) are enriched in basic and acidic residues. Glycyl lysine isopeptide (Lys-Gly) (interchain with G-Cter in SUMO2) cross-links involve residues Lys915, Lys971, Lys976, Lys984, Lys988, Lys998, Lys1024, and Lys1033. 5 C2H2-type zinc fingers span residues 1017 to 1039 (YICELCAKQFQSSSTLKMHMRCH), 1045 to 1067 (YQCKTCGRRFSVQGNLQKHERIH), 1073 to 1095 (FICQYCNKAFTLNETLKIHERIH), 1101 to 1123 (YHCQFCFQGFLYLSTKRNHERRH), and 1132 to 1154 (FACFQCPKICKTAAALRMHQKKH). Glycyl lysine isopeptide (Lys-Gly) (interchain with G-Cter in SUMO2) cross-links involve residues Lys1116, Lys1139, Lys1142, Lys1157, and Lys1190. A disordered region spans residues 1172–1203 (NSDLLESQPCTDSEDSDQKDDIKKPLLKMSFE).

Interacts with CBFA2T3, ZBTB4 and RBBP6. In terms of processing, ubiquitinated by RBBP6; leading to its degradation by the proteasome. Widely expressed throughout the adult brain where it is found mainly in neurons. Also expressed in the adrenal medulla. Not detected in non-neural tissues including heart, spleen, liver and muscle. In the embryo, expressed in the developing brain and spinal cord but not in the migratory neural crest. Also expressed in the limbs, transiently in somites, and in the embryonic liver. In the embryonic neural tube, expression is restricted to late postmitotic neurons.

The protein resides in the nucleus. It localises to the chromosome. Transcriptional regulator with bimodal DNA-binding specificity. Binds with a higher affinity to methylated CpG dinucleotides in the consensus sequence 5'-CGCG-3' but can also bind to E-box elements (5'-CACGTG-3'). Can also bind specifically to a single methyl-CpG pair. Represses transcription in a methyl-CpG-dependent manner. Plays an important role in regulating DNA-replication and common fragile sites (CFS) stability in a RBBP6- and MCM10-dependent manner; represses expression of MCM10 which plays an important role in DNA-replication. Acts as a transcriptional activator. May be involved in the differentiation and/or survival of late postmitotic neurons. The sequence is that of Zinc finger and BTB domain-containing protein 38 from Rattus norvegicus (Rat).